The chain runs to 347 residues: Histone deacetylase 11 (347 aa).

Positions 14 to 318 (TRWPIVYSPR…ARIIADSILN (305 aa)) are histone deacetylase. H143 is an active-site residue.

Belongs to the histone deacetylase family. In terms of assembly, interacts with HDAC6.

Its subcellular location is the nucleus. The catalysed reaction is N(6)-acetyl-L-lysyl-[histone] + H2O = L-lysyl-[histone] + acetate. Functionally, responsible for the deacetylation of lysine residues on the N-terminal part of the core histones (H2A, H2B, H3 and H4). Histone deacetylation gives a tag for epigenetic repression and plays an important role in transcriptional regulation, cell cycle progression and developmental events. Histone deacetylases act via the formation of large multiprotein complexes. In Macaca fascicularis (Crab-eating macaque), this protein is Histone deacetylase 11 (HDAC11).